Here is a 211-residue protein sequence, read N- to C-terminus: Pyruvate dehydrogenase E1 component subunit beta, mitochondrial (211 aa).

Tyr-31 is modified (phosphotyrosine). Residues Ile-48, Ala-96, Ile-97, Asp-99, and Asn-101 each coordinate K(+).

Heterotetramer of two PDHA1 and two PDHB subunits. The heterotetramer interacts with DLAT, and is part of the multimeric pyruvate dehydrogenase complex that contains multiple copies of pyruvate dehydrogenase (E1), dihydrolipoamide acetyltransferase (DLAT, E2) and lipoamide dehydrogenase (DLD, E3). These subunits are bound to an inner core composed of about 48 DLAT and 12 PDHX molecules. Interacts with DLAT. Thiamine diphosphate serves as cofactor.

It localises to the mitochondrion matrix. It catalyses the reaction N(6)-[(R)-lipoyl]-L-lysyl-[protein] + pyruvate + H(+) = N(6)-[(R)-S(8)-acetyldihydrolipoyl]-L-lysyl-[protein] + CO2. Functionally, the pyruvate dehydrogenase complex catalyzes the overall conversion of pyruvate to acetyl-CoA and CO(2), and thereby links the glycolytic pathway to the tricarboxylic cycle. This is Pyruvate dehydrogenase E1 component subunit beta, mitochondrial from Mesocricetus auratus (Golden hamster).